A 345-amino-acid chain; its full sequence is MTQAATRPTAETGNDEDILAVARRQVLEGGQGLSRDQVLQVLRLPDDRLDDLLALAHEVRMRWCGPEVEVEGIISLKTGGCPEDCHFCSQSGLFASPVRSARLDIPSLVEAAKQTAKSGATEFCIVAAVRGPDERLLAQVAAGIEAIRNEVEINIACSLGMLTAEQVEQLAEMGVHRYNHNLETARSFFPNVVTTHTWEERWDTLSMVRDAGMEVCCGGILGMGETLEQRAEFAAELAELGPDEVPLNFLNPRPGTPFGDLEVMPATEALKSVAAFRLALPRTMLRFAGGREITLGDLGAKKGILGGINAVIVGNYLTTLGRPAESDLELLDDLQMPLKGLNASL.

Positions 66-291 (PEVEVEGIIS…RTMLRFAGGR (226 aa)) constitute a Radical SAM core domain. Positions 81, 85, and 88 each coordinate [4Fe-4S] cluster. Residues C124, C157, C216, and R286 each contribute to the [2Fe-2S] cluster site.

It belongs to the radical SAM superfamily. Biotin synthase family. Homodimer. [4Fe-4S] cluster serves as cofactor. [2Fe-2S] cluster is required as a cofactor.

The enzyme catalyses (4R,5S)-dethiobiotin + (sulfur carrier)-SH + 2 reduced [2Fe-2S]-[ferredoxin] + 2 S-adenosyl-L-methionine = (sulfur carrier)-H + biotin + 2 5'-deoxyadenosine + 2 L-methionine + 2 oxidized [2Fe-2S]-[ferredoxin]. It participates in cofactor biosynthesis; biotin biosynthesis; biotin from 7,8-diaminononanoate: step 2/2. In terms of biological role, catalyzes the conversion of dethiobiotin (DTB) to biotin by the insertion of a sulfur atom into dethiobiotin via a radical-based mechanism. The sequence is that of Biotin synthase from Mycobacterium avium (strain 104).